A 1021-amino-acid polypeptide reads, in one-letter code: Inversin (1021 aa).

ANK repeat units lie at residues 7-36 (QNPS…LRDS), 40-69 (FGRT…GINK), 73-102 (SQRT…DWRL), 106-137 (EEMT…EVDT), 141-170 (NKQT…NIGI), 174-206 (EGKI…TESL), 213-243 (EGRT…SVTA), 247-276 (LFRT…SGMI), 281-310 (QGAT…VRDE), 314-343 (EGRT…DIDI), 349-378 (YGGT…MVDP), 382-411 (MKHT…RVDL), 415-444 (DGHS…SPNL), 448-477 (AGRT…DPNI), 481-510 (EGRT…FPNH), and 516-546 (ERYT…SIAA). The D-box 1 signature appears at 483–491 (RTALHWSCN). Positions 548 to 577 (QDIAASSIQALYKGYKVRRAFRERKKLLMR) constitute an IQ 1 domain. Composition is skewed to basic and acidic residues over residues 579-598 (EQLR…REAE) and 653-669 (SRRE…REPE). Disordered stretches follow at residues 579–602 (EQLR…QQLS), 632–691 (KDSV…KKCP), and 704–868 (GPDT…GTCS). The segment covering 722–731 (PAGSSRPGSA) has biased composition (low complexity). Composition is skewed to polar residues over residues 759–781 (GAHS…TSKG) and 791–802 (TGSQPSNNTSVT). A compositionally biased stretch (basic and acidic residues) spans 803 to 866 (RQKEKRQEKE…KEKEKKKDGT (64 aa)). The D-box 2 motif lies at 862 to 870 (KKDGTCSKN). Positions 869-898 (KNQAAVVIQRAWRRSCVRGRIRKVLCRSLK) constitute an IQ 2 domain.

In terms of assembly, binds calmodulin via its IQ domains.

It localises to the cytoplasm. Its subcellular location is the cytoskeleton. Its function is as follows. Required for normal renal development and establishment of left-right axis. Probably acts as a molecular switch between different Wnt signaling pathways. Inhibits the canonical Wnt pathway by targeting cytoplasmic disheveled for degradation by the ubiquitin-proteasome. This suggests that it is required in renal development to oppose the repression of terminal differentiation of tubular epithelial cells by Wnt signaling. The polypeptide is Inversin (invs) (Danio rerio (Zebrafish)).